The following is a 620-amino-acid chain: Chaperone protein HscA homolog (620 aa).

It belongs to the heat shock protein 70 family.

Chaperone involved in the maturation of iron-sulfur cluster-containing proteins. Has a low intrinsic ATPase activity which is markedly stimulated by HscB. The sequence is that of Chaperone protein HscA homolog from Janthinobacterium sp. (strain Marseille) (Minibacterium massiliensis).